A 292-amino-acid chain; its full sequence is Protein LRATD1 (292 aa).

Ser38 is modified (phosphoserine). The 96-residue stretch at 133–228 (PAPEPPAPAP…CRFGKREFKA (96 aa)) folds into the LRAT domain.

The protein belongs to the LRATD family. As to expression, only detected in testis. Highly expressed in colon cancer cells.

The protein resides in the cytoplasm. Its function is as follows. May play a role in cell morphology and motility. The polypeptide is Protein LRATD1 (Homo sapiens (Human)).